The primary structure comprises 90 residues: Gene 56 protein (90 aa).

The region spanning 1 to 90 (MRTMFTPITI…DYYTASETGL (90 aa)) is the Glutaredoxin domain. Cys-16 and Cys-19 form a disulfide bridge.

The protein is Gene 56 protein (56) of Mycobacterium phage D29 (Mycobacteriophage D29).